Reading from the N-terminus, the 42-residue chain is Photosystem II reaction center protein J (42 aa).

The chain crosses the membrane as a helical span at residues 10–30; the sequence is IPLWLVLTIIGLAAIALLALF.

The protein belongs to the PsbJ family. PSII is composed of 1 copy each of membrane proteins PsbA, PsbB, PsbC, PsbD, PsbE, PsbF, PsbH, PsbI, PsbJ, PsbK, PsbL, PsbM, PsbT, PsbY, PsbZ, Psb30/Ycf12, at least 3 peripheral proteins of the oxygen-evolving complex and a large number of cofactors. It forms dimeric complexes.

It is found in the plastid. Its subcellular location is the chloroplast thylakoid membrane. Its function is as follows. This protein is a component of the reaction center of photosystem II. One of the components of the core complex of photosystem II (PSII). PSII is a light-driven water:plastoquinone oxidoreductase that uses light energy to abstract electrons from H(2)O, generating O(2) and a proton gradient subsequently used for ATP formation. It consists of a core antenna complex that captures photons, and an electron transfer chain that converts photonic excitation into a charge separation. The chain is Photosystem II reaction center protein J from Euglena gracilis.